The following is a 298-amino-acid chain: Putative ankyrin repeat-containing protein TP_0502 (298 aa).

ANK repeat units lie at residues 143–172 (CFEE…SAAL), 176–205 (RGTP…PVDQ), 210–239 (RAYS…DPNV), and 243–272 (NGQT…NPYL).

The sequence is that of Putative ankyrin repeat-containing protein TP_0502 from Treponema pallidum (strain Nichols).